Reading from the N-terminus, the 122-residue chain is Small ribosomal subunit protein uS13 (122 aa).

The tract at residues 92 to 122 is disordered; that stretch reads HRNGLPVRGQRTHTNARTRKGKAKPIAGKKK. Basic residues predominate over residues 101–122; it reads QRTHTNARTRKGKAKPIAGKKK.

The protein belongs to the universal ribosomal protein uS13 family. As to quaternary structure, part of the 30S ribosomal subunit. Forms a loose heterodimer with protein S19. Forms two bridges to the 50S subunit in the 70S ribosome.

Its function is as follows. Located at the top of the head of the 30S subunit, it contacts several helices of the 16S rRNA. In the 70S ribosome it contacts the 23S rRNA (bridge B1a) and protein L5 of the 50S subunit (bridge B1b), connecting the 2 subunits; these bridges are implicated in subunit movement. Contacts the tRNAs in the A and P-sites. This chain is Small ribosomal subunit protein uS13, found in Erythrobacter litoralis (strain HTCC2594).